The following is a 496-amino-acid chain: MAAVPQLSAPSAPARSADGILIGDRQYSEVYLTIDYSLIPEERLSPTPSMSDGLDLNTETDLRILGCELIQSAGILLRLPQVAMATGQVLFHRFFYSKSFVKHSFEIIAMACINLASKIEEAPRRIRDVINVCHHLRQIRAKRTPSPLILDQSYINTKNHVIKAERRILKELGFCVHVKHPHKIIVMYLQVLECERNQTLVQTAWNYMNDCLRTNVFVRFDAETIACACIYLAARALQLSLPNRPHWFLLFGATEENIQDICITTLRLYSRIKPNYEFLEKEVDKRKVALQEAKLKAKGLNPDGTPAILSMGGFSPASKPSSPRDVKTEEKSPNFAKVKREMDDKQSSKSPYNGLRKENKRSRSVSRSRSRTKSRSRSHSPRRHYNNRRRSRSGTYSSRSRSRSRSHSESPRRHHNHGSPHMKLKHRVEDLRGRHAHKRKKSHSPSKSREPSELAKKHRHEHGHHRERRERSRSFERSHKNKHHGSSHSGHGRHRR.

2 cyclin-like regions span residues 68 to 170 (ELIQ…RILK) and 183 to 267 (KIIV…TTLR). Residues 301–496 (NPDGTPAILS…SHSGHGRHRR (196 aa)) form a disordered region. A compositionally biased stretch (basic and acidic residues) spans 322–347 (SPRDVKTEEKSPNFAKVKREMDDKQS). Basic residues-rich tracts occupy residues 358–392 (ENKR…RRSR), 412–426 (RRHH…KLKH), 434–446 (RHAH…HSPS), and 456–468 (KKHR…HRER). An RS region spans residues 363-406 (RSVSRSRSRTKSRSRSHSPRRHYNNRRRSRSGTYSSRSRSRSRS). Basic and acidic residues predominate over residues 469–478 (RERSRSFERS). The span at 479–496 (HKNKHHGSSHSGHGRHRR) shows a compositional bias: basic residues.

It belongs to the cyclin family. Cyclin L subfamily.

The protein resides in the nucleus speckle. It localises to the nucleus. Its subcellular location is the nucleoplasm. Functionally, involved in pre-mRNA splicing. In Xenopus laevis (African clawed frog), this protein is Cyclin-L1 (ccnl1).